We begin with the raw amino-acid sequence, 411 residues long: Ornithine cyclodeaminase (411 aa).

Residues Asn-236, Ala-237, Asp-315, Thr-347, Met-348, Leu-349, His-350, Asp-368, Asp-391, and Val-392 each coordinate NAD(+).

This sequence belongs to the AgrE/ArgZ ornithine cyclodeaminase family. NAD(+) serves as cofactor.

It carries out the reaction L-ornithine = L-proline + NH4(+). Functionally, catalyzes the conversion of ornithine to proline, with the release of ammonia. The chain is Ornithine cyclodeaminase from Methanothermobacter thermautotrophicus (strain ATCC 29096 / DSM 1053 / JCM 10044 / NBRC 100330 / Delta H) (Methanobacterium thermoautotrophicum).